The following is a 157-amino-acid chain: Protein Smg homolog (157 aa).

It belongs to the Smg family.

The polypeptide is Protein Smg homolog (Shewanella woodyi (strain ATCC 51908 / MS32)).